Reading from the N-terminus, the 124-residue chain is Protein S100-A16 (124 aa).

One can recognise an EF-hand 1; degenerate domain in the interval 23-37 (VSKHSLVKNKISKSS). Positions 54–89 (GNRKAADKLIQNLDANHDGRICFDEYWTMIGGITSP) constitute an EF-hand 2 domain. Positions 67, 69, 71, 73, and 78 each coordinate Ca(2+). A disordered region spans residues 97 to 124 (QECQQESQQECQQESQQESQQESQQGSS).

The protein belongs to the S-100 family. In terms of assembly, homodimer. Interacts with TP53. Ubiquitous. Widely distributed throughout the adult brain and predominantly expressed within specific astrocyte populations. Expressed at high level in adipose tissues of obese animals.

The protein localises to the nucleus. It localises to the nucleolus. Its subcellular location is the cytoplasm. Functionally, calcium-binding protein. Binds one calcium ion per monomer. Can promote differentiation of adipocytes (in vitro). Overexpression in 3T3-L1 preadipocytes increases their proliferation, enhances adipogenesis and reduces insulin-stimulated glucose uptake. The polypeptide is Protein S100-A16 (Mus musculus (Mouse)).